Reading from the N-terminus, the 459-residue chain is Glutamate--tRNA ligase 1 (459 aa).

The short motif at 8–18 (PSPTGYIHIGN) is the 'HIGH' region element. The 'KMSKS' region signature appears at 249-253 (GLSKR). Lysine 252 contributes to the ATP binding site.

The protein belongs to the class-I aminoacyl-tRNA synthetase family. Glutamate--tRNA ligase type 1 subfamily. In terms of assembly, monomer.

The protein localises to the cytoplasm. It carries out the reaction tRNA(Glu) + L-glutamate + ATP = L-glutamyl-tRNA(Glu) + AMP + diphosphate. Catalyzes the attachment of glutamate to tRNA(Glu) in a two-step reaction: glutamate is first activated by ATP to form Glu-AMP and then transferred to the acceptor end of tRNA(Glu). The polypeptide is Glutamate--tRNA ligase 1 (Bartonella quintana (strain Toulouse) (Rochalimaea quintana)).